A 321-amino-acid polypeptide reads, in one-letter code: MPLLPVALISSMLYFQMVIMAGTVMLAYYFEYTDTFTVNVQGFFCHDSAYRKPYPGPEDSSAVPPVLLYSLAAGVPVLVIIVGETAVFCLQLATRDFENQEKTILTGDCCYINPLVRRTVRFLGIYAFGLFATDIFVNAGQVVTGNLAPHFLALCKPNYTALGCQQYTQFISGEEACTGNPDLIMRARKTFPSKEAALSVYAATYLTMYITSTIKAKGTRLAKPVLCLGLMCLAFLTGLNRVAEYRNHWSDVIAGFLVGISIAVFLVVCVVNNFKGRQPENGHIHRDNVARMPMTNIPRVESPLEKVTSLQNHVTAFAEVT.

6 consecutive transmembrane segments (helical) span residues 6-26 (VALI…TVML), 62-82 (AVPP…VIIV), 122-142 (FLGI…AGQV), 196-213 (AALS…ITST), 225-245 (VLCL…VAEY), and 252-272 (VIAG…CVVN).

Belongs to the PA-phosphatase related phosphoesterase family.

Its subcellular location is the cell membrane. Its function is as follows. Induces filopodia formation and promotes neurite growth in a CDC42-independent manner; impedes neurite growth inhibitory-mediated axonal retraction. The sequence is that of Phospholipid phosphatase-related protein type 5 from Mus musculus (Mouse).